Consider the following 551-residue polypeptide: MSETFAELFEKSLTETDLRPGALVKATVVEVRPDRVIVNAGLKSEGIIPASEFRNEEPHVGDEFFVVIEASDNGFGETRLSREKARRAKAWSELEKAYKAGEMVKGVIIERVKGGFTVDLNSVRAFLPGSLVDVKPVRDPGYLEDKEIDFKIIKMDQRRNNVVVSRRAVMEAETSAERQARLEELQEGQEIKGVIKNITDYGAFVDLGGVDGLLHITDMAWGRVKHPSDLLNVGDEVHVKVLKFDRDKKRVSLGMKQLADDPWAKIERRYPVNSRVFGKVTNITDYGCFVKLEEGVEGLVHTSELDWTNKNIHPSKVVQSGEEVEVMVLEIDEERRRISLGIKQCKRNPWQEFAEKHEKDEKITGKVRSITDFGMFIGLEGDIDGLVHLSDISWTESGEEAIRNYKKGDEVQAVILGIDPERERISLGIKQLEGDPFMEFVESYDKDAVIQAKVKEVESKQAVLELADQVLGQMRLADYTYDRVKDLTQELNVGDEVAVKIVNVDRKNRLINVSHKAVEGRSEKGTRTVSDVPTKTTLGDLLKEKIQSKDE.

6 S1 motif domains span residues 21–83 (GALV…LSRE), 101–167 (GEMV…VSRR), 188–256 (GQEI…LGMK), 273–343 (NSRV…LGIK), 360–430 (DEKI…LGIK), and 447–516 (DAVI…VSHK).

It belongs to the bacterial ribosomal protein bS1 family.

Functionally, binds mRNA; thus facilitating recognition of the initiation point. It is needed to translate mRNA with a short Shine-Dalgarno (SD) purine-rich sequence. This chain is Small ribosomal subunit protein bS1 (rpsA), found in Coxiella burnetii (strain RSA 493 / Nine Mile phase I).